Reading from the N-terminus, the 254-residue chain is Phosphoribosylaminoimidazole-succinocarboxamide synthase (254 aa).

It belongs to the SAICAR synthetase family.

It carries out the reaction 5-amino-1-(5-phospho-D-ribosyl)imidazole-4-carboxylate + L-aspartate + ATP = (2S)-2-[5-amino-1-(5-phospho-beta-D-ribosyl)imidazole-4-carboxamido]succinate + ADP + phosphate + 2 H(+). It functions in the pathway purine metabolism; IMP biosynthesis via de novo pathway; 5-amino-1-(5-phospho-D-ribosyl)imidazole-4-carboxamide from 5-amino-1-(5-phospho-D-ribosyl)imidazole-4-carboxylate: step 1/2. This is Phosphoribosylaminoimidazole-succinocarboxamide synthase from Sinorhizobium fredii (strain NBRC 101917 / NGR234).